Reading from the N-terminus, the 342-residue chain is Pyridoxal 4-dehydrogenase (342 aa).

The active site involves Asp-56. The Proton donor role is filled by Tyr-61. Lys-86 is an active-site residue. Residue 245–255 (GVFNSGILAAP) participates in NADP(+) binding.

Belongs to the aldo/keto reductase family. As to quaternary structure, homodimer.

It carries out the reaction pyridoxal + NAD(+) = 4-pyridoxolactone + NADH + H(+). It functions in the pathway cofactor degradation; B6 vitamer degradation; 4-pyridoxate from pyridoxal: step 1/2. This is Pyridoxal 4-dehydrogenase (pld1) from Microbacterium luteolum (Aureobacterium luteolum).